Reading from the N-terminus, the 453-residue chain is Serine/threonine-protein phosphatase 2A 55 kDa regulatory subunit B delta isoform (453 aa).

4 WD repeats span residues 32-71, 97-138, 181-219, and 230-270; these read AEAD…KSRP, EIEE…KRAE, AHTY…RSFN, and ELTE…LCDR. A Phosphoserine modification is found at Ser-285. WD repeat units lie at residues 289-327, 344-385, and 420-452; these read EIIS…RPVE, ENDC…DVTL, and DFNK…QDKI. Tyr-305 is subject to Phosphotyrosine. At Thr-308 the chain carries Phosphothreonine.

It belongs to the phosphatase 2A regulatory subunit B family. As to quaternary structure, PP2A consists of a common heterodimeric core enzyme, composed of a 36 kDa catalytic subunit (subunit C) and a 65 kDa constant regulatory subunit (PR65 or subunit A), that associates with a variety of regulatory subunits. Proteins that associate with the core dimer include three families of regulatory subunits B (the R2/B/PR55/B55, R3/B''/PR72/PR130/PR59 and R5/B'/B56 families), the 48 kDa variable regulatory subunit, viral proteins, and cell signaling molecules. Interacts with ENSA (when phosphorylated at 'Ser-67') and ARPP19 (when phosphorylated at 'Ser-62'), leading to inhibit PP2A activity. Interacts with IER5.

It localises to the cytoplasm. Its function is as follows. Substrate-recognition subunit of protein phosphatase 2A (PP2A) that plays a key role in cell cycle by controlling mitosis entry and exit. Involved in chromosome clustering during late mitosis by mediating dephosphorylation of MKI67. The activity of PP2A complexes containing PPP2R2D (PR55-delta) fluctuate during the cell cycle: the activity is high in interphase and low in mitosis. The polypeptide is Serine/threonine-protein phosphatase 2A 55 kDa regulatory subunit B delta isoform (PPP2R2D) (Homo sapiens (Human)).